Consider the following 458-residue polypeptide: UDP-N-acetylmuramoylalanine--D-glutamate ligase (458 aa).

124 to 130 contributes to the ATP binding site; sequence GSDGKTT.

Belongs to the MurCDEF family.

It is found in the cytoplasm. It catalyses the reaction UDP-N-acetyl-alpha-D-muramoyl-L-alanine + D-glutamate + ATP = UDP-N-acetyl-alpha-D-muramoyl-L-alanyl-D-glutamate + ADP + phosphate + H(+). Its pathway is cell wall biogenesis; peptidoglycan biosynthesis. In terms of biological role, cell wall formation. Catalyzes the addition of glutamate to the nucleotide precursor UDP-N-acetylmuramoyl-L-alanine (UMA). The polypeptide is UDP-N-acetylmuramoylalanine--D-glutamate ligase (Clostridium novyi (strain NT)).